The following is a 570-amino-acid chain: DNA polymerase/3'-5' exonuclease PolX (570 aa).

The tract at residues 1-315 (MHKKDIIRLL…PLIPPEIRES (315 aa)) is DNA polymerase type-X. Residues Asp-193, Asp-195, and Asp-240 each coordinate a divalent metal cation. The segment at 333-570 (QIKGDLHMHS…DVEAFLKRND (238 aa)) is 3'-5' exonuclease. His-339, His-341, His-371, Glu-410, His-437, His-465, Asp-526, and His-528 together coordinate Mn(2+).

The protein in the N-terminal section; belongs to the DNA polymerase type-X family. In the C-terminal section; belongs to the PHP family. As to quaternary structure, monomer. Requires Mn(2+) as cofactor. Mg(2+) is required as a cofactor.

The enzyme catalyses DNA(n) + a 2'-deoxyribonucleoside 5'-triphosphate = DNA(n+1) + diphosphate. It carries out the reaction Exonucleolytic cleavage in the 3'- to 5'-direction to yield nucleoside 5'-phosphates.. With respect to regulation, the polymerization activity is inhibited in the presence of 2'-3'-dideoxynucleoside 5'-triphosphate (ddNTP). In terms of biological role, strictly DNA-template-directed DNA polymerase, preferentially acting on DNA structures containing gaps from one to a few nucleotides and bearing a phosphate group at the 5' end of the downstream DNA. The fact that PolX is able to conduct filling of a single-nucleotide gap, allowing further sealing of the resulting nick by a DNA ligase, points to a putative role in base excision repair (BER) during the B.subtilis life cycle. Moreover, also possesses a 3'-5' exonuclease activity able to edit unpaired 3'-termini in a gapped DNA substrate and likely involved in resecting unannealed 3'-termini during DNA repair. The same PolX molecule could perform the subsequent gap-filling step. Does not display 5'-deoxyribose 5'-phosphate (dRP) lyase activity, as predicted by the lack of the lysine and tyrosine residues responsible for the dRP lyase activity in some other PolX members. The chain is DNA polymerase/3'-5' exonuclease PolX (polX) from Bacillus subtilis (strain 168).